Consider the following 143-residue polypeptide: Nucleoside diphosphate kinase (143 aa).

Positions 11, 59, 87, 93, 104, and 114 each coordinate ATP. H117 functions as the Pros-phosphohistidine intermediate in the catalytic mechanism.

It belongs to the NDK family. Homotetramer. The cofactor is Mg(2+).

Its subcellular location is the cytoplasm. The catalysed reaction is a 2'-deoxyribonucleoside 5'-diphosphate + ATP = a 2'-deoxyribonucleoside 5'-triphosphate + ADP. It carries out the reaction a ribonucleoside 5'-diphosphate + ATP = a ribonucleoside 5'-triphosphate + ADP. Functionally, major role in the synthesis of nucleoside triphosphates other than ATP. The ATP gamma phosphate is transferred to the NDP beta phosphate via a ping-pong mechanism, using a phosphorylated active-site intermediate. This chain is Nucleoside diphosphate kinase, found in Stutzerimonas stutzeri (strain A1501) (Pseudomonas stutzeri).